Here is a 414-residue protein sequence, read N- to C-terminus: Serine hydroxymethyltransferase (414 aa).

(6S)-5,6,7,8-tetrahydrofolate contacts are provided by residues Leu116 and 120–122 (GHL). Position 224 is an N6-(pyridoxal phosphate)lysine (Lys224). (6S)-5,6,7,8-tetrahydrofolate is bound by residues Glu240 and 348 to 350 (SPF).

It belongs to the SHMT family. As to quaternary structure, homodimer. Pyridoxal 5'-phosphate serves as cofactor.

The protein resides in the cytoplasm. It carries out the reaction (6R)-5,10-methylene-5,6,7,8-tetrahydrofolate + glycine + H2O = (6S)-5,6,7,8-tetrahydrofolate + L-serine. It functions in the pathway one-carbon metabolism; tetrahydrofolate interconversion. It participates in amino-acid biosynthesis; glycine biosynthesis; glycine from L-serine: step 1/1. Catalyzes the reversible interconversion of serine and glycine with tetrahydrofolate (THF) serving as the one-carbon carrier. This reaction serves as the major source of one-carbon groups required for the biosynthesis of purines, thymidylate, methionine, and other important biomolecules. Also exhibits THF-independent aldolase activity toward beta-hydroxyamino acids, producing glycine and aldehydes, via a retro-aldol mechanism. The polypeptide is Serine hydroxymethyltransferase (Campylobacter fetus subsp. fetus (strain 82-40)).